A 179-amino-acid polypeptide reads, in one-letter code: DELTA-actitoxin-Afr1c (179 aa).

The segment at 1 to 29 (SAEVAGAIIDGASLTFDVLQTVLKALGDV) is N-terminal alpha-helix that contributes to the pore. Residues 11 to 30 (GASLTFDVLQTVLKALGDVS) form an N-terminal region region. R31 provides a ligand contact to an N-(acyl)-sphingosylphosphocholine. N-acetyl-D-glucosamine 6-sulfate-binding residues include Y51 and R53. Positions 53, 54, 79, 85, 113, 114, 116, 133, 137, 138, 144, and 168 each coordinate an N-(acyl)-sphingosylphosphocholine. Positions 105 to 120 (SIPFDYNLYSNWWNVK) are trp-rich region, which is important for the binding to lipid membrane. Y138 is a binding site for N-acetyl-D-glucosamine 6-sulfate. The Cell attachment site, crucial for protein stability signature appears at 144 to 146 (RGD).

It belongs to the actinoporin family. Sea anemone subfamily. Octamer or nonamer in membranes. Monomer in the soluble state.

Its subcellular location is the secreted. It is found in the nematocyst. It localises to the target cell membrane. In terms of biological role, pore-forming toxin (PFT) that consists of a crown-shaped octamer or nonamer that forms cation-selective hydrophilic pores of about 1.5 nm (inside) and 13 nm (outside) and causes cytolysis. It causes cardiac stimulation. Also causes hemolysis (HC(50)=0.3 nM). Interestingly, the Phe-16 is crucial for hemolysis. Pore formation is a multi-step process that involves specific recognition of membrane sphingomyelin (but neither cholesterol nor phosphatidylcholine) using aromatic rich region and adjacent phosphocholine (POC) binding site, firm binding to the membrane (mainly driven by hydrophobic interactions) accompanied by the transfer of the N-terminal region to the lipid-water interface and finally pore formation after oligomerization of monomers. It is probable that a dimeric form is an assembly intermediate before the complete oligomerization. The formation of stable pores occurs only in vesicles composed of DOPC/SM (there is no oligomerization when the PFT is treated with vesicles of DOPC or SM alone). The transmembrane pore displays 8 lateral perforations, one at each subunit-subunit interface, partially occupied by the acyl-chain region of a bridging lipid. Each pore contains 24 lipid molecules, firmly bound to each subunit, that is, 3 lipids (L1, L2, L3, L4 and/or L5) are associated to each subunit. Lipid L1 bridges 2 subunits, whereas lipids L2 and L3 bind to sites at single subunit. This Actinia fragacea (Strawberry anemone) protein is DELTA-actitoxin-Afr1c.